Here is a 255-residue protein sequence, read N- to C-terminus: 2-(S)-hydroxypropyl-CoM dehydrogenase 3 (255 aa).

NAD(+) is bound by residues I19, D38, 64–65 (DV), and N91. 2 residues coordinate (S)-2-hydroxypropyl-coenzyme M: S143 and Y156. Catalysis depends on Y156, which acts as the Proton acceptor. K160 lines the NAD(+) pocket. T188 contacts (S)-2-hydroxypropyl-coenzyme M. 189 to 193 (VTSTG) contributes to the NAD(+) binding site. Y215 provides a ligand contact to (S)-2-hydroxypropyl-coenzyme M.

The protein belongs to the short-chain dehydrogenases/reductases (SDR) family. In terms of assembly, homotetramer.

It carries out the reaction (S)-2-hydroxypropyl-coenzyme M + NAD(+) = 2-oxopropyl-coenzyme M + NADH + H(+). Not inhibited by 2-(2-methyl-2-hydroxypropylthio)ethanesulfonate (M-HPC), an achiral analog of both R-HPC and S-HPC. Functionally, involved in aliphatic epoxide carboxylation. Catalyzes the reversible oxidation of (2S)-2-hydroxypropyl-coenzyme M (S-HPC) to 2-oxopropyl-coenzyme M (2-KPC). The enzyme is highly specific for the S enantiomers. In vitro can also use the aliphatic ketone 2-butanone and the aliphatic alcohol 2-propanol, and shows an inherent stereoselectivity for 2-butanone reduction. The polypeptide is 2-(S)-hydroxypropyl-CoM dehydrogenase 3 (Xanthobacter autotrophicus (strain ATCC BAA-1158 / Py2)).